The following is a 239-amino-acid chain: Beta-glucanase (239 aa).

An N-terminal signal peptide occupies residues 1 to 25 (MKRVLLILVTGLFMSLCGITSSVSA). The 214-residue stretch at 26-239 (QTGGSFFEPF…HYDWMRYRKK (214 aa)) folds into the GH16 domain. An intrachain disulfide couples C57 to C86. Residue E134 is the Nucleophile of the active site.

Belongs to the glycosyl hydrolase 16 family.

It catalyses the reaction Hydrolysis of (1-&gt;4)-beta-D-glucosidic linkages in beta-D-glucans containing (1-&gt;3)- and (1-&gt;4)-bonds.. The chain is Beta-glucanase (bglA) from Bacillus amyloliquefaciens (Bacillus velezensis).